Reading from the N-terminus, the 122-residue chain is Large ribosomal subunit protein uL14c (122 aa).

Belongs to the universal ribosomal protein uL14 family. In terms of assembly, part of the 50S ribosomal subunit.

The protein localises to the plastid. It localises to the chloroplast. Its function is as follows. Binds to 23S rRNA. This is Large ribosomal subunit protein uL14c from Capsella bursa-pastoris (Shepherd's purse).